Reading from the N-terminus, the 166-residue chain is 16S rRNA aminocarboxypropyltransferase (166 aa).

5 residues coordinate S-adenosyl-L-methionine: threonine 17, isoleucine 62, leucine 84, tyrosine 99, and serine 103.

This sequence belongs to the TDD superfamily. TSR3 family.

It localises to the cytoplasm. It carries out the reaction an N(1)-methylpseudouridine in rRNA + S-adenosyl-L-methionine = N(1)-methyl-N(3)-[(3S)-3-amino-3-carboxypropyl]pseudouridine in rRNA + S-methyl-5'-thioadenosine + H(+). Its function is as follows. Aminocarboxypropyltransferase that catalyzes the aminocarboxypropyl transfer on pseudouridine corresponding to position 914 in M.jannaschii 16S rRNA. It constitutes the last step in biosynthesis of the hypermodified N1-methyl-N3-(3-amino-3-carboxypropyl) pseudouridine (m1acp3-Psi). The chain is 16S rRNA aminocarboxypropyltransferase from Saccharolobus islandicus (strain M.16.27) (Sulfolobus islandicus).